A 63-amino-acid polypeptide reads, in one-letter code: Large ribosomal subunit protein bL28 (63 aa).

Positions 1 to 20 (MSKRCAITGKGPMVGNNVSH) are disordered.

This sequence belongs to the bacterial ribosomal protein bL28 family.

In Campylobacter fetus subsp. fetus (strain 82-40), this protein is Large ribosomal subunit protein bL28.